Reading from the N-terminus, the 294-residue chain is Large ribosomal subunit protein uL4m (294 aa).

The interval 120-139 (VRGGGRKPWQQKGSGRARHG) is disordered. At arginine 147 the chain carries Omega-N-methylarginine.

Belongs to the universal ribosomal protein uL4 family. Component of the mitochondrial ribosome large subunit (39S) which comprises a 16S rRNA and about 50 distinct proteins. Interacts with MIEF1 upstream open reading frame protein.

It is found in the mitochondrion. The polypeptide is Large ribosomal subunit protein uL4m (MRPL4) (Bos taurus (Bovine)).